Reading from the N-terminus, the 183-residue chain is Probable RNA 2'-phosphotransferase (183 aa).

Belongs to the KptA/TPT1 family.

In terms of biological role, removes the 2'-phosphate from RNA via an intermediate in which the phosphate is ADP-ribosylated by NAD followed by a presumed transesterification to release the RNA and generate ADP-ribose 1''-2''-cyclic phosphate (APPR&gt;P). May function as an ADP-ribosylase. This chain is Probable RNA 2'-phosphotransferase, found in Clostridium perfringens (strain 13 / Type A).